A 162-amino-acid polypeptide reads, in one-letter code: MTIINKTAQTLFLTELVKGMSLTLDYFFRKKVTLNYPFEKGPLSPRFRGEHALRRYQTGEERCIACKLCEAICPAQAITIESEPRIDGSRRTTRYDIDMTKCIYCGFCQEACPVDAIVEGPNFEFATETHEELLYDKEKLLQNGDRWETEIAANLANEALYR.

4Fe-4S ferredoxin-type domains are found at residues 54 to 83 (RRYQ…IESE) and 93 to 122 (TRYD…EGPN). Residues Cys-63, Cys-66, Cys-69, Cys-73, Cys-102, Cys-105, Cys-108, and Cys-112 each contribute to the [4Fe-4S] cluster site.

The protein belongs to the complex I 23 kDa subunit family. The cofactor is [4Fe-4S] cluster.

It localises to the mitochondrion. The catalysed reaction is a ubiquinone + NADH + 5 H(+)(in) = a ubiquinol + NAD(+) + 4 H(+)(out). In terms of biological role, core subunit of the mitochondrial membrane respiratory chain NADH dehydrogenase (Complex I) that is believed to belong to the minimal assembly required for catalysis. Complex I functions in the transfer of electrons from NADH to the respiratory chain. The immediate electron acceptor for the enzyme is believed to be ubiquinone. May donate electrons to ubiquinone. This Reclinomonas americana protein is NADH-ubiquinone oxidoreductase subunit 8 (NAD8).